The following is a 159-amino-acid chain: Large ribosomal subunit protein uL11 (159 aa).

Belongs to the universal ribosomal protein uL11 family. Part of the ribosomal stalk of the 50S ribosomal subunit. Interacts with L10 and the large rRNA to form the base of the stalk. L10 forms an elongated spine to which L12 dimers bind in a sequential fashion forming a multimeric L10(L12)X complex.

Forms part of the ribosomal stalk which helps the ribosome interact with GTP-bound translation factors. The chain is Large ribosomal subunit protein uL11 from Methanothrix thermoacetophila (strain DSM 6194 / JCM 14653 / NBRC 101360 / PT) (Methanosaeta thermophila).